The following is an 838-amino-acid chain: V-type proton ATPase 116 kDa subunit a 1 (838 aa).

Over 1–388 the chain is Cytoplasmic; that stretch reads MGELFRSEEM…DAYGIGTYRE (388 aa). Residues Thr-250 and Thr-360 each carry the phosphothreonine modification. A Phosphotyrosine modification is found at Tyr-364. A helical transmembrane segment spans residues 389–407; the sequence is INPAPYTVITFPFLFAVMF. Over 408 to 409 the chain is Vacuolar; it reads GD. The helical transmembrane segment at 410 to 426 threads the bilayer; it reads FGHGILMTLFAVWMVLR. Residues 427 to 441 lie on the Cytoplasmic side of the membrane; that stretch reads ESRILSQKNENEMFS. The chain crosses the membrane as a helical span at residues 442 to 471; sequence MVFSGRYIILLMGLFSIYTGLIYNDCFSKS. Residues 472–535 are Vacuolar-facing; sequence LNIFGSSWSV…ATNKLTFLNS (64 aa). The chain crosses the membrane as a helical span at residues 536–555; sequence FKMKMSVILGIIHMLFGVSL. Residues 556–573 lie on the Cytoplasmic side of the membrane; that stretch reads SLFNHIYFKKPLNIYFGF. The helical transmembrane segment at 574–594 threads the bilayer; the sequence is IPEIIFMSSLFGYLVILIFYK. Residues 595-639 lie on the Vacuolar side of the membrane; that stretch reads WTAYDAHSSRNAPSLLIHFINMFLFSYPESGNAMLYSGQKGIQCF. A helical membrane pass occupies residues 640–659; the sequence is LIVVAMLCVPWMLLFKPLIL. The Cytoplasmic portion of the chain corresponds to 660–725; that stretch reads RHQYLRKKHL…DTMVHQAIHT (66 aa). The chain crosses the membrane as a helical span at residues 726 to 750; sequence IEYCLGCISNTASYLRLWALSLAHA. Topologically, residues 751-771 are vacuolar; the sequence is QLSEVLWTMVIHIGLHVRSLA. The chain crosses the membrane as a helical span at residues 772-810; sequence GGLGLFFIFAAFATLTVAILLIMEGLSAFLHALRLHWVE. Residues 811-838 are Cytoplasmic-facing; it reads FQNKFYTGTGFKFLPFSFEHIREGKFDE.

Belongs to the V-ATPase 116 kDa subunit family. As to quaternary structure, V-ATPase is a heteromultimeric enzyme made up of two complexes: the ATP-hydrolytic V1 complex and the proton translocation V0 complex. The V1 complex consists of three catalytic AB heterodimers that form a heterohexamer, three peripheral stalks each consisting of EG heterodimers, one central rotor including subunits D and F, and the regulatory subunits C and H. The proton translocation complex V0 consists of the proton transport subunit a, a ring of proteolipid subunits c9c'', rotary subunit d, subunits e and f, and the accessory subunits ATP6AP1/Ac45 and ATP6AP2/PRR. Interacts with SPAAR. As to expression, expressed in brain (at protein level). Expressed in heart, kidney, liver, spleen, and to a lesser extent in brain.

The protein localises to the cytoplasmic vesicle. It is found in the clathrin-coated vesicle membrane. It localises to the secretory vesicle. Its subcellular location is the synaptic vesicle membrane. The protein resides in the melanosome. In terms of biological role, subunit of the V0 complex of vacuolar(H+)-ATPase (V-ATPase), a multisubunit enzyme composed of a peripheral complex (V1) that hydrolyzes ATP and a membrane integral complex (V0) that translocates protons. V-ATPase is responsible for the acidification of various organelles, such as lysosomes, endosomes, the trans-Golgi network, and secretory granules, including synaptic vesicles. In certain cell types, can be exported to the plasma membrane, where it is involved in the acidification of the extracellular environment. Required for assembly and activity of the vacuolar ATPase. Through its action on compartment acidification, plays an essential role in neuronal development in terms of integrity and connectivity of neurons. This Rattus norvegicus (Rat) protein is V-type proton ATPase 116 kDa subunit a 1 (Atp6v0a1).